Consider the following 1578-residue polypeptide: Pentafunctional AROM polypeptide (1578 aa).

Residues 1 to 384 (MAEPTKIKIL…YEPKASVVPN (384 aa)) form a 3-dehydroquinate synthase region. NAD(+) contacts are provided by residues 44-46 (DTN), 81-84 (EVSK), 114-116 (GGV), and D119. R130 lines the 7-phospho-2-dehydro-3-deoxy-D-arabino-heptonate pocket. 139–140 (TT) is an NAD(+) binding site. D146 and K152 together coordinate 7-phospho-2-dehydro-3-deoxy-D-arabino-heptonate. K161 lines the NAD(+) pocket. A 7-phospho-2-dehydro-3-deoxy-D-arabino-heptonate-binding site is contributed by N162. NAD(+)-binding positions include 179–182 (FLET) and N190. Zn(2+) is bound at residue E194. Residues 194–197 (EVIK) and K250 each bind 7-phospho-2-dehydro-3-deoxy-D-arabino-heptonate. E260 functions as the Proton acceptor; for 3-dehydroquinate synthase activity in the catalytic mechanism. 7-phospho-2-dehydro-3-deoxy-D-arabino-heptonate contacts are provided by residues 264–268 (RNLLN) and H271. H271 provides a ligand contact to Zn(2+). H275 serves as the catalytic Proton acceptor; for 3-dehydroquinate synthase activity. 7-phospho-2-dehydro-3-deoxy-D-arabino-heptonate-binding residues include H287 and K356. H287 is a binding site for Zn(2+). Positions 397–842 (VHPGVEPASN…WDTLRQKFSA (446 aa)) are EPSP synthase. C824 (for EPSP synthase activity) is an active-site residue. Positions 864–1055 (TASVFIIGMR…KRKKHSFFVS (192 aa)) are shikimate kinase. 871–878 (GMRGAGKT) lines the ATP pocket. Residues 1056-1276 (LTLPDLRTAG…AAPGQLSATE (221 aa)) are 3-dehydroquinase. H1179 acts as the Proton acceptor; for 3-dehydroquinate dehydratase activity in catalysis. Residue K1207 is the Schiff-base intermediate with substrate; for 3-dehydroquinate dehydratase activity of the active site. Positions 1289–1578 (QKKFAVFGTP…EDARAAVLSS (290 aa)) are shikimate dehydrogenase.

The protein in the N-terminal section; belongs to the sugar phosphate cyclases superfamily. Dehydroquinate synthase family. It in the 2nd section; belongs to the EPSP synthase family. This sequence in the 3rd section; belongs to the shikimate kinase family. In the 4th section; belongs to the type-I 3-dehydroquinase family. The protein in the C-terminal section; belongs to the shikimate dehydrogenase family. Homodimer. Zn(2+) is required as a cofactor.

The protein localises to the cytoplasm. The enzyme catalyses 7-phospho-2-dehydro-3-deoxy-D-arabino-heptonate = 3-dehydroquinate + phosphate. It catalyses the reaction 3-dehydroquinate = 3-dehydroshikimate + H2O. It carries out the reaction shikimate + NADP(+) = 3-dehydroshikimate + NADPH + H(+). The catalysed reaction is shikimate + ATP = 3-phosphoshikimate + ADP + H(+). The enzyme catalyses 3-phosphoshikimate + phosphoenolpyruvate = 5-O-(1-carboxyvinyl)-3-phosphoshikimate + phosphate. It participates in metabolic intermediate biosynthesis; chorismate biosynthesis; chorismate from D-erythrose 4-phosphate and phosphoenolpyruvate: step 2/7. The protein operates within metabolic intermediate biosynthesis; chorismate biosynthesis; chorismate from D-erythrose 4-phosphate and phosphoenolpyruvate: step 3/7. It functions in the pathway metabolic intermediate biosynthesis; chorismate biosynthesis; chorismate from D-erythrose 4-phosphate and phosphoenolpyruvate: step 4/7. Its pathway is metabolic intermediate biosynthesis; chorismate biosynthesis; chorismate from D-erythrose 4-phosphate and phosphoenolpyruvate: step 5/7. It participates in metabolic intermediate biosynthesis; chorismate biosynthesis; chorismate from D-erythrose 4-phosphate and phosphoenolpyruvate: step 6/7. Its function is as follows. The AROM polypeptide catalyzes 5 consecutive enzymatic reactions in prechorismate polyaromatic amino acid biosynthesis. This is Pentafunctional AROM polypeptide from Aspergillus flavus (strain ATCC 200026 / FGSC A1120 / IAM 13836 / NRRL 3357 / JCM 12722 / SRRC 167).